The following is an 85-amino-acid chain: UPF0291 protein SpyM3_1470 (85 aa).

Positions 62 to 85 (TPEKLRQVQREKGLHGRSLDDPKS) are disordered.

Belongs to the UPF0291 family.

It is found in the cytoplasm. In Streptococcus pyogenes serotype M3 (strain ATCC BAA-595 / MGAS315), this protein is UPF0291 protein SpyM3_1470.